The following is a 516-amino-acid chain: Cytochrome P450 1A2 (516 aa).

S69 carries an O-linked (GlcNAc) serine glycan. F226 provides a ligand contact to substrate. C458 is a binding site for heme.

The protein belongs to the cytochrome P450 family. As to quaternary structure, interacts with PGRMC1; the interaction requires PGRMC1 homodimerization. The cofactor is heme.

The protein resides in the endoplasmic reticulum membrane. It localises to the microsome membrane. It catalyses the reaction an organic molecule + reduced [NADPH--hemoprotein reductase] + O2 = an alcohol + oxidized [NADPH--hemoprotein reductase] + H2O + H(+). The catalysed reaction is 17beta-estradiol + reduced [NADPH--hemoprotein reductase] + O2 = 2-hydroxy-17beta-estradiol + oxidized [NADPH--hemoprotein reductase] + H2O + H(+). It carries out the reaction 17beta-estradiol + reduced [NADPH--hemoprotein reductase] + O2 = 4-hydroxy-17beta-estradiol + oxidized [NADPH--hemoprotein reductase] + H2O + H(+). The enzyme catalyses estrone + reduced [NADPH--hemoprotein reductase] + O2 = 2-hydroxyestrone + oxidized [NADPH--hemoprotein reductase] + H2O + H(+). It catalyses the reaction estrone + reduced [NADPH--hemoprotein reductase] + O2 = 4-hydroxyestrone + oxidized [NADPH--hemoprotein reductase] + H2O + H(+). The catalysed reaction is cholesterol + reduced [NADPH--hemoprotein reductase] + O2 = 25-hydroxycholesterol + oxidized [NADPH--hemoprotein reductase] + H2O + H(+). It carries out the reaction all-trans-retinol + reduced [NADPH--hemoprotein reductase] + O2 = all-trans-retinal + oxidized [NADPH--hemoprotein reductase] + 2 H2O + H(+). The enzyme catalyses all-trans-retinal + reduced [NADPH--hemoprotein reductase] + O2 = all-trans-retinoate + oxidized [NADPH--hemoprotein reductase] + H2O + 2 H(+). It catalyses the reaction (5Z,8Z,11Z,14Z)-eicosatetraenoate + reduced [NADPH--hemoprotein reductase] + O2 = (14R,15S)-epoxy-(5Z,8Z,11Z)-eicosatrienoate + oxidized [NADPH--hemoprotein reductase] + H2O + H(+). The catalysed reaction is (5Z,8Z,11Z,14Z)-eicosatetraenoate + reduced [NADPH--hemoprotein reductase] + O2 = (14S,15R)-epoxy-(5Z,8Z,11Z)-eicosatrienoate + oxidized [NADPH--hemoprotein reductase] + H2O + H(+). It carries out the reaction (5Z,8Z,11Z,14Z,17Z)-eicosapentaenoate + reduced [NADPH--hemoprotein reductase] + O2 = (17R,18S)-epoxy-(5Z,8Z,11Z,14Z)-eicosatetraenoate + oxidized [NADPH--hemoprotein reductase] + H2O + H(+). The enzyme catalyses (4Z,7Z,10Z,13Z,16Z,19Z)-docosahexaenoate + reduced [NADPH--hemoprotein reductase] + O2 = (19R,20S)-epoxy-(4Z,7Z,10Z,13Z,16Z)-docosapentaenoate + oxidized [NADPH--hemoprotein reductase] + H2O + H(+). It catalyses the reaction (5S)-hydroperoxy-(6E,8Z,11Z,14Z)-eicosatetraenoate = 5-oxo-(6E,8Z,11Z,14Z)-eicosatetraenoate + H2O. The catalysed reaction is (12S)-hydroperoxy-(5Z,8Z,10E,14Z)-eicosatetraenoate = 12-oxo-(5Z,8Z,10E,14Z)-eicosatetraenoate + H2O. It carries out the reaction (15S)-hydroperoxy-(5Z,8Z,11Z,13E)-eicosatetraenoate = 15-oxo-(5Z,8Z,11Z,13E)-eicosatetraenoate + H2O. The enzyme catalyses (13S)-hydroperoxy-(9Z,11E)-octadecadienoate = 13-oxo-(9Z,11E)-octadecadienoate + H2O. It catalyses the reaction (5Z,8Z,11Z,14Z)-eicosatetraenoate + reduced [NADPH--hemoprotein reductase] + O2 = 13-hydroxy-(5Z,8Z,11Z,14Z)-eicosatetraenoate + oxidized [NADPH--hemoprotein reductase] + H2O + H(+). The catalysed reaction is (5Z,8Z,11Z,14Z)-eicosatetraenoate + reduced [NADPH--hemoprotein reductase] + O2 = 19-hydroxy-(5Z,8Z,11Z,14Z)-eicosatetraenoate + oxidized [NADPH--hemoprotein reductase] + H2O + H(+). It carries out the reaction (9Z,12Z)-octadecadienoate + reduced [NADPH--hemoprotein reductase] + O2 = 11-hydroxy-(9Z,12Z)-octadecadienoate + oxidized [NADPH--hemoprotein reductase] + H2O + H(+). The protein operates within cofactor metabolism; retinol metabolism. It participates in steroid metabolism; cholesterol metabolism. Its pathway is lipid metabolism; arachidonate metabolism. Functionally, a cytochrome P450 monooxygenase involved in the metabolism of various endogenous substrates, including fatty acids, steroid hormones and vitamins. Mechanistically, uses molecular oxygen inserting one oxygen atom into a substrate, and reducing the second into a water molecule, with two electrons provided by NADPH via cytochrome P450 reductase (NADPH--hemoprotein reductase). Catalyzes the hydroxylation of carbon-hydrogen bonds. Exhibits high catalytic activity for the formation of hydroxyestrogens from estrone (E1) and 17beta-estradiol (E2), namely 2-hydroxy E1 and E2. Metabolizes cholesterol toward 25-hydroxycholesterol, a physiological regulator of cellular cholesterol homeostasis. May act as a major enzyme for all-trans retinoic acid biosynthesis in the liver. Catalyzes two successive oxidative transformation of all-trans retinol to all-trans retinal and then to the active form all-trans retinoic acid. Primarily catalyzes stereoselective epoxidation of the last double bond of polyunsaturated fatty acids (PUFA), displaying a strong preference for the (R,S) stereoisomer. Catalyzes bisallylic hydroxylation and omega-1 hydroxylation of PUFA. May also participate in eicosanoids metabolism by converting hydroperoxide species into oxo metabolites (lipoxygenase-like reaction, NADPH-independent). Plays a role in the oxidative metabolism of xenobiotics. Catalyzes the N-hydroxylation of heterocyclic amines and the O-deethylation of phenacetin. Metabolizes caffeine via N3-demethylation. In Pongo abelii (Sumatran orangutan), this protein is Cytochrome P450 1A2 (CYP1A2).